The primary structure comprises 254 residues: 3-dehydroquinate dehydratase (254 aa).

3-dehydroquinate is bound by residues 47 to 49 and Arg83; that span reads EWR. His144 functions as the Proton donor/acceptor in the catalytic mechanism. Lys171 serves as the catalytic Schiff-base intermediate with substrate. Arg214, Ser233, and Gln237 together coordinate 3-dehydroquinate.

Belongs to the type-I 3-dehydroquinase family. As to quaternary structure, homodimer.

It catalyses the reaction 3-dehydroquinate = 3-dehydroshikimate + H2O. The protein operates within metabolic intermediate biosynthesis; chorismate biosynthesis; chorismate from D-erythrose 4-phosphate and phosphoenolpyruvate: step 3/7. Functionally, involved in the third step of the chorismate pathway, which leads to the biosynthesis of aromatic amino acids. Catalyzes the cis-dehydration of 3-dehydroquinate (DHQ) and introduces the first double bond of the aromatic ring to yield 3-dehydroshikimate. This Clostridium botulinum (strain Eklund 17B / Type B) protein is 3-dehydroquinate dehydratase.